The sequence spans 69 residues: MSFNLRNAIMANIQGSSQQEVEATIVDAMESGEEKMLPGLGVLFEVYWKHADESQKDELCAEISKGLNE.

This sequence belongs to the SspI family.

The protein resides in the spore core. This Shouchella clausii (strain KSM-K16) (Alkalihalobacillus clausii) protein is Small, acid-soluble spore protein I.